The sequence spans 366 residues: MVLHLLLFLLLTPQGGHSCQGLELARELVLAKVRALFLDALGPPAVTREGGDPGVRRLPRRHALGGFTHRGSEPEEEEDVSQAILFPATDASCEDKSAARGLAQEAEEGLFRYMFRPSQHTRSRQVTSAQLWFHTGLDRQGTAASNSSEPLLGLLALSPGGPVAVPMSLGHAPPHWAVLHLATSALSLLTHPVLVLLLRCPLCTCSARPEATPFLVAHTRTRPPSGGERARRSTPLMSWPWSPSALRLLQRPPEEPAAHANCHRVALNISFQELGWERWIVYPPSFIFHYCHGGCGLHIPPNLSLPVPGAPPTPAQPYSLLPGAQPCCAALPGTMRPLHVRTTSDGGYSFKYETVPNLLTQHCACI.

An N-terminal signal peptide occupies residues Met-1–Ser-18. The propeptide occupies Cys-19–Arg-61. Positions His-62 to Arg-232 are cleaved as a propeptide — inhibin alpha N-terminal region. N-linked (GlcNAc...) asparagine glycosylation is found at Asn-146 and Asn-268. Intrachain disulfides connect Cys-262–Cys-328, Cys-291–Cys-363, and Cys-295–Cys-365. N-linked (GlcNAc...) asparagine; partial glycosylation is present at Asn-302.

Belongs to the TGF-beta family. As to quaternary structure, dimeric, linked by one or more disulfide bonds. Activin B is a dimer of alpha and beta-B. Inhibin A is a dimer of alpha and beta-A. Inhibin B is a dimer of alpha and beta-B. Interacts with TGFBR3L; this interaction regulates female fertility. In terms of processing, proteolytic processing yields a number of bioactive forms. The 20/23 kDa forms consist solely of the mature alpha chain, the 26/29 kDa forms consist of the most N-terminal propeptide linked through a disulfide bond to the mature alpha chain, the 50/53 kDa forms encompass the entire proprotein. Each type can be furthermore either mono- or diglycosylated, causing the mass difference. In terms of tissue distribution, originally found in ovary (granulosa cells) and testis (Sertoli cells), but widely distributed in many tissues including brain and placenta. In adrenal cortex expression is limited to the zona reticularis and the innermost zona fasciculata in the normal gland, extending centripetally into the zona fasciculata in hyperplasia. Also found in adrenocortical tumors. Also expressed in prostate epithelium of benign prostatic hyperplasia, in regions of basal cell hyperplasia and in nonmalignant regions of high grade prostate cancer. Only circulating inhibin B is found in male, whereas circulating inhibins A and B are found in female.

It localises to the secreted. Its function is as follows. Inhibins and activins inhibit and activate, respectively, the secretion of follitropin by the pituitary gland. Inhibins/activins are involved in regulating a number of diverse functions such as hypothalamic and pituitary hormone secretion, gonadal hormone secretion, germ cell development and maturation, erythroid differentiation, insulin secretion, nerve cell survival, embryonic axial development or bone growth, depending on their subunit composition. Inhibins appear to oppose the functions of activins. Inhibin A is a dimer of alpha/INHA and beta-A/INHBA that functions as a feedback regulator in the hypothalamic-pituitary-gonadal (HPG) axis. Inhibits the secretion of FSH from the anterior pituitary gland by acting on pituitary gonadotrope cells. Antagonizes activin A by binding to the proteoglycan, betaglycan, and forming a stable complex with and, thereby, sequestering type II activin receptors while excluding type I receptor. Functionally, inhibin B is a dimer of alpha and beta-B that plays a crucial role in the regulation of the reproductive system by inhibiting the secretion of follicle-stimulating hormone (FSH) from the anterior pituitary gland. Thereby, maintains reproductive homeostasis in both males and females. Acts as a more potent suppressor of FSH release than inhibin A. Functions as competitive receptor antagonist binding activin type II receptors with high affinity in the presence of the TGF-beta type III coreceptor/TGFBR3L. The chain is Inhibin alpha chain (INHA) from Homo sapiens (Human).